The primary structure comprises 411 residues: Signal-transducing adaptor protein 2 (411 aa).

The 101-residue stretch at 20-120 folds into the PH domain; sequence HYYESFLEKK…GFILTVVELR (101 aa). A Phosphotyrosine modification is found at tyrosine 22. The 97-residue stretch at 152–248 folds into the SH2 domain; sequence WCFLQVSRLE…RALVPFLLDE (97 aa). Phosphotyrosine; by PTK6 is present on tyrosine 250. Positions 291-320 are disordered; it reads VPVSVSSQEDKLPQLPPLPQLPDTDENYVT. Tyrosine 318 and tyrosine 330 each carry phosphotyrosine. The tract at residues 338–364 is disordered; the sequence is SSQAVPLKPKKPARLPAKPPKPSVVPK. Residues 390-410 are a coiled coil; that stretch reads TRLGDITAELEEKLQKRRALE.

Interacts with PTK6 and CSF1R. In terms of processing, phosphorylated on tyrosine. Phosphorylated by PTK6 at Tyr-250 modulates PTK6-mediated STAT3 activation. As to expression, widely expressed.

It localises to the cytoplasm. Its subcellular location is the membrane. In terms of biological role, substrate of protein kinase PTK6. May play a regulatory role in the acute-phase response in systemic inflammation and may modulate STAT3 activity. The protein is Signal-transducing adaptor protein 2 (Stap2) of Mus musculus (Mouse).